The sequence spans 410 residues: Dual-specificity RNA methyltransferase RlmN (410 aa).

Residues 7–26 form a disordered region; the sequence is VSSENLDGQQQSSSTPASPA. Low complexity predominate over residues 15–26; sequence QQQSSSTPASPA. Glu120 acts as the Proton acceptor in catalysis. Residues 130 to 373 enclose the Radical SAM core domain; the sequence is TGSRKTLCIS…CTIRQTRGDD (244 aa). Cysteines 137 and 378 form a disulfide. Residues Cys144, Cys148, and Cys151 each contribute to the [4Fe-4S] cluster site. S-adenosyl-L-methionine-binding positions include 200 to 201, Ser232, 254 to 256, and Asn335; these read GE and SLH. Cys378 (S-methylcysteine intermediate) is an active-site residue.

Belongs to the radical SAM superfamily. RlmN family. [4Fe-4S] cluster serves as cofactor.

Its subcellular location is the cytoplasm. The catalysed reaction is adenosine(2503) in 23S rRNA + 2 reduced [2Fe-2S]-[ferredoxin] + 2 S-adenosyl-L-methionine = 2-methyladenosine(2503) in 23S rRNA + 5'-deoxyadenosine + L-methionine + 2 oxidized [2Fe-2S]-[ferredoxin] + S-adenosyl-L-homocysteine. It carries out the reaction adenosine(37) in tRNA + 2 reduced [2Fe-2S]-[ferredoxin] + 2 S-adenosyl-L-methionine = 2-methyladenosine(37) in tRNA + 5'-deoxyadenosine + L-methionine + 2 oxidized [2Fe-2S]-[ferredoxin] + S-adenosyl-L-homocysteine. Functionally, specifically methylates position 2 of adenine 2503 in 23S rRNA and position 2 of adenine 37 in tRNAs. m2A2503 modification seems to play a crucial role in the proofreading step occurring at the peptidyl transferase center and thus would serve to optimize ribosomal fidelity. The sequence is that of Dual-specificity RNA methyltransferase RlmN from Acinetobacter baumannii (strain AB307-0294).